Here is an 874-residue protein sequence, read N- to C-terminus: Bifunctional uridylyltransferase/uridylyl-removing enzyme (874 aa).

A uridylyltransferase region spans residues 1 to 332 (MPLQSPLTFS…NGGATENAEI (332 aa)). The interval 333–692 (LDADFQRRGS…ISKKATRGGT (360 aa)) is uridylyl-removing. One can recognise an HD domain in the interval 451 to 573 (VDEHSIRLLK…VRDEESLEYL (123 aa)). ACT domains are found at residues 693 to 777 (EVFV…RTPN) and 800 to 874 (LMEF…AVTA).

This sequence belongs to the GlnD family. Mg(2+) is required as a cofactor.

The catalysed reaction is [protein-PII]-L-tyrosine + UTP = [protein-PII]-uridylyl-L-tyrosine + diphosphate. It carries out the reaction [protein-PII]-uridylyl-L-tyrosine + H2O = [protein-PII]-L-tyrosine + UMP + H(+). Uridylyltransferase (UTase) activity is inhibited by glutamine, while glutamine activates uridylyl-removing (UR) activity. Its function is as follows. Modifies, by uridylylation and deuridylylation, the PII regulatory proteins (GlnB and homologs), in response to the nitrogen status of the cell that GlnD senses through the glutamine level. Under low glutamine levels, catalyzes the conversion of the PII proteins and UTP to PII-UMP and PPi, while under higher glutamine levels, GlnD hydrolyzes PII-UMP to PII and UMP (deuridylylation). Thus, controls uridylylation state and activity of the PII proteins, and plays an important role in the regulation of nitrogen assimilation and metabolism. The chain is Bifunctional uridylyltransferase/uridylyl-removing enzyme from Vibrio parahaemolyticus serotype O3:K6 (strain RIMD 2210633).